Consider the following 471-residue polypeptide: Probable ribonuclease FAU-1 (471 aa).

The protein belongs to the FAU-1 family.

In terms of biological role, probable RNase involved in rRNA stability through maturation and/or degradation of precursor rRNAs. Binds to RNA in loop regions with AU-rich sequences. This Thermococcus gammatolerans (strain DSM 15229 / JCM 11827 / EJ3) protein is Probable ribonuclease FAU-1.